A 267-amino-acid chain; its full sequence is Probable ribosomal RNA small subunit methyltransferase A (267 aa).

Leucine 12, glycine 37, glutamate 58, aspartate 83, and asparagine 100 together coordinate S-adenosyl-L-methionine.

This sequence belongs to the class I-like SAM-binding methyltransferase superfamily. rRNA adenine N(6)-methyltransferase family. RsmA subfamily.

The protein localises to the cytoplasm. Its function is as follows. Specifically dimethylates two adjacent adenosines in the loop of a conserved hairpin near the 3'-end of 16S rRNA in the 30S particle. May play a critical role in biogenesis of 30S subunits. The protein is Probable ribosomal RNA small subunit methyltransferase A of Methanococcus maripaludis (strain DSM 14266 / JCM 13030 / NBRC 101832 / S2 / LL).